We begin with the raw amino-acid sequence, 306 residues long: Acetyl-coenzyme A carboxylase carboxyl transferase subunit beta (306 aa).

A CoA carboxyltransferase N-terminal domain is found at 25 to 294 (VWTKCDSCGQ…PQDPLPHEPR (270 aa)). Residues cysteine 29, cysteine 32, cysteine 48, and cysteine 51 each contribute to the Zn(2+) site. A C4-type zinc finger spans residues 29-51 (CDSCGQVLYRAELERNLEVCPKC). The tract at residues 281 to 306 (NRPQPQDPLPHEPRPDAVPEDHQDEV) is disordered. Over residues 289 to 306 (LPHEPRPDAVPEDHQDEV) the composition is skewed to basic and acidic residues.

Belongs to the AccD/PCCB family. As to quaternary structure, acetyl-CoA carboxylase is a heterohexamer composed of biotin carboxyl carrier protein (AccB), biotin carboxylase (AccC) and two subunits each of ACCase subunit alpha (AccA) and ACCase subunit beta (AccD). It depends on Zn(2+) as a cofactor.

The protein localises to the cytoplasm. The catalysed reaction is N(6)-carboxybiotinyl-L-lysyl-[protein] + acetyl-CoA = N(6)-biotinyl-L-lysyl-[protein] + malonyl-CoA. It participates in lipid metabolism; malonyl-CoA biosynthesis; malonyl-CoA from acetyl-CoA: step 1/1. Component of the acetyl coenzyme A carboxylase (ACC) complex. Biotin carboxylase (BC) catalyzes the carboxylation of biotin on its carrier protein (BCCP) and then the CO(2) group is transferred by the transcarboxylase to acetyl-CoA to form malonyl-CoA. The chain is Acetyl-coenzyme A carboxylase carboxyl transferase subunit beta from Sodalis glossinidius (strain morsitans).